The sequence spans 458 residues: Tetracycline resistance protein (458 aa).

The next 12 helical transmembrane spans lie at 12–33, 81–100, 111–129, 140–162, 165–185, 201–221, 223–240, 256–276, 297–317, 324–344, 346–365, and 432–451; these read HNQV…EMVL, LLLF…FVGH, FIQG…VVVA, AFGL…GGMV, YIHW…VPFL, MAGI…TTSY, FSFL…VQHI, VFFV…AGFV, GIIF…GLLV, YVLT…AFFI, AAPW…LSFT, and MLIL…LNVY.

Belongs to the major facilitator superfamily. TCR/Tet family.

It localises to the cell membrane. Its function is as follows. Resistance to tetracycline by an active tetracycline efflux. This is an energy-dependent process that decreases the accumulation of the antibiotic in whole cells. This protein functions as a metal-tetracycline/H(+) antiporter. The polypeptide is Tetracycline resistance protein (tetB) (Bacillus subtilis (strain 168)).